The primary structure comprises 82 residues: Mu-conotoxin MrVIB (82 aa).

Positions 1 to 22 are cleaved as a signal peptide; it reads MKLTCMMIVAVLFLTAWTLVMA. Positions 23–49 are excised as a propeptide; it reads DDSNNGLANHFLKSRDEMEDPEASKLE. 3 disulfides stabilise this stretch: C53-C71, C60-C76, and C70-C81.

Belongs to the conotoxin O1 superfamily. As to expression, expressed by the venom duct.

It is found in the secreted. Functionally, muO-conotoxins are gating-modifier toxins that inhibit sodium current by trapping the domain II voltage sensor in the closed position to prevent opening of the sodium channel. This toxin has a preference for Nav1.4/SCN4A over Nav1.2/SCN2A sodium channels. It blocks Nav channels by interacting mainly with the C-terminal part of the pore loop of domain-3. It also blocks fast-inactivating calcium current. Blocks Nav1.8/SCN10A sodium channels and has potent and long-lasting local anesthetic effects. It can also block propagation of action potentials in A- and C-fibers in sciatic nerve as well as skeletal muscle in isolated preparations. This Conus marmoreus (Marble cone) protein is Mu-conotoxin MrVIB.